The sequence spans 612 residues: Threonine--tRNA ligase (612 aa).

The catalytic stretch occupies residues 218–509 (DHRKLGVELG…LSEHFGGNFP (292 aa)). Cys-310, His-361, and His-486 together coordinate Zn(2+).

This sequence belongs to the class-II aminoacyl-tRNA synthetase family. As to quaternary structure, homodimer. Zn(2+) serves as cofactor.

It localises to the cytoplasm. It catalyses the reaction tRNA(Thr) + L-threonine + ATP = L-threonyl-tRNA(Thr) + AMP + diphosphate + H(+). In terms of biological role, catalyzes the attachment of threonine to tRNA(Thr) in a two-step reaction: L-threonine is first activated by ATP to form Thr-AMP and then transferred to the acceptor end of tRNA(Thr). Also edits incorrectly charged L-seryl-tRNA(Thr). The polypeptide is Threonine--tRNA ligase (Helicobacter pylori (strain P12)).